The following is an 88-amino-acid chain: Phosphocarrier protein HPr (88 aa).

Residues 1 to 88 (MEKRDFHVVA…ETMKKEGLSE (88 aa)) enclose the HPr domain. The Pros-phosphohistidine intermediate role is filled by H15. At S46 the chain carries Phosphoserine; by HPrK/P.

The protein belongs to the HPr family.

The protein localises to the cytoplasm. With respect to regulation, phosphorylation on Ser-46 inhibits the phosphoryl transfer from enzyme I to HPr. Its function is as follows. General (non sugar-specific) component of the phosphoenolpyruvate-dependent sugar phosphotransferase system (sugar PTS). This major carbohydrate active-transport system catalyzes the phosphorylation of incoming sugar substrates concomitantly with their translocation across the cell membrane. The phosphoryl group from phosphoenolpyruvate (PEP) is transferred to the phosphoryl carrier protein HPr by enzyme I. Phospho-HPr then transfers it to the PTS EIIA domain. In terms of biological role, P-Ser-HPr interacts with the catabolite control protein A (CcpA), forming a complex that binds to DNA at the catabolite response elements cre, operator sites preceding a large number of catabolite-regulated genes. Thus, P-Ser-HPr is a corepressor in carbon catabolite repression (CCR), a mechanism that allows bacteria to coordinate and optimize the utilization of available carbon sources. P-Ser-HPr also plays a role in inducer exclusion, in which it probably interacts with several non-PTS permeases and inhibits their transport activity. This chain is Phosphocarrier protein HPr (ptsH), found in Latilactobacillus sakei (Lactobacillus sakei).